The sequence spans 95 residues: Small ribosomal subunit protein bS6 (95 aa).

Belongs to the bacterial ribosomal protein bS6 family.

Functionally, binds together with bS18 to 16S ribosomal RNA. This Aster yellows witches'-broom phytoplasma (strain AYWB) protein is Small ribosomal subunit protein bS6.